The sequence spans 378 residues: Spermidine/putrescine import ATP-binding protein PotA (378 aa).

The region spanning 18 to 248 (VLLSGISKSF…PKNLFVAGFI (231 aa)) is the ABC transporter domain. An ATP-binding site is contributed by 50 to 57 (GPSGCGKT).

This sequence belongs to the ABC transporter superfamily. Spermidine/putrescine importer (TC 3.A.1.11.1) family. As to quaternary structure, the complex is composed of two ATP-binding proteins (PotA), two transmembrane proteins (PotB and PotC) and a solute-binding protein (PotD).

It localises to the cell inner membrane. It catalyses the reaction ATP + H2O + polyamine-[polyamine-binding protein]Side 1 = ADP + phosphate + polyamineSide 2 + [polyamine-binding protein]Side 1.. Functionally, part of the ABC transporter complex PotABCD involved in spermidine/putrescine import. Responsible for energy coupling to the transport system. This Salmonella choleraesuis (strain SC-B67) protein is Spermidine/putrescine import ATP-binding protein PotA.